A 115-amino-acid chain; its full sequence is Large ribosomal subunit protein bL19 (115 aa).

This sequence belongs to the bacterial ribosomal protein bL19 family.

In terms of biological role, this protein is located at the 30S-50S ribosomal subunit interface and may play a role in the structure and function of the aminoacyl-tRNA binding site. The sequence is that of Large ribosomal subunit protein bL19 from Thermosipho melanesiensis (strain DSM 12029 / CIP 104789 / BI429).